The following is a 423-amino-acid chain: MQYEDKNGVNEPSRRRLLKGIGALALAGSCPVAHAQKTQSAPGTLSPVARNEKQPFYGEHQAGILTPQQAAMMLVAFDVLASDKADLERLFRLLTQRFAFLTQGGAAPETPNPRLPPLDSGILGGYIAPDNLTITLSVGHSLFDERFGLAPQMPKKLQKMTRFPNDSLDAALCHGDVLLQICANTQDTVIHALRDIIKHTPDLLSVRWKREGFISDHAARSKGKETPINLLGFKDGTANPDSQNDKLMQKVVWVTADQQEPAWTIGGSYQAVRLIQFRVEFWDRTPLKEQQTIFGRDKQTGAPLGMQHEHDVPDYASDPEGKGIALDSHIRLANPRTAESESSLMLRRGYSYSLGVTNSGQLDMGLLFVCYQHDLEKGFLTVQKRLNGEALEEYVKPIGGGYFFALPGVKDANDYLGSALLRV.

The tat-type signal signal peptide spans 1–35; sequence MQYEDKNGVNEPSRRRLLKGIGALALAGSCPVAHA. Residues 236 to 238, His-329, 334 to 336, and Arg-347 each bind heme b; these read GTA and NPR.

It belongs to the DyP-type peroxidase family. EfeB subfamily. As to quaternary structure, the heme-bound EfeB forms a homodimer whereas the apo-form mainly exists as a monomer. Part of a ferrous iron transporter composed of EfeU, EfeO and EfeB. Requires heme b as cofactor. Predicted to be exported by the Tat system. The position of the signal peptide cleavage has not been experimentally proven.

The protein resides in the periplasm. The catalysed reaction is heme b + 2 H(+) = protoporphyrin IX + Fe(2+). In terms of biological role, involved in the recovery of exogenous heme iron. Extracts iron from heme while preserving the protoporphyrin ring intact. Also displays peroxidase activity on guaiacol and catechol in vitro. The deferrochelatase activity appears to be closely related to the peroxidation activity, but the link is unclear. This Escherichia coli O157:H7 protein is Deferrochelatase (efeB).